Consider the following 228-residue polypeptide: L-ribulose-5-phosphate 4-epimerase UlaF (228 aa).

Residues 26 to 27 (GN), 43 to 44 (SG), and 72 to 73 (SS) each bind substrate. Positions 74, 93, and 95 each coordinate Zn(2+). The active-site Proton donor/acceptor is the Asp-118. Position 167 (His-167) interacts with Zn(2+). Catalysis depends on Tyr-225, which acts as the Proton donor/acceptor.

Belongs to the aldolase class II family. AraD/FucA subfamily. Requires Zn(2+) as cofactor.

It carries out the reaction L-ribulose 5-phosphate = D-xylulose 5-phosphate. It functions in the pathway cofactor degradation; L-ascorbate degradation; D-xylulose 5-phosphate from L-ascorbate: step 4/4. In terms of biological role, catalyzes the isomerization of L-ribulose 5-phosphate to D-xylulose 5-phosphate. Is involved in the anaerobic L-ascorbate utilization. This Escherichia coli O81 (strain ED1a) protein is L-ribulose-5-phosphate 4-epimerase UlaF.